The chain runs to 48 residues: uncharacterized protein (48 aa).

The segment at 1-30 (MLGRTKLGNRNAQANNNAKKKNGFQTHFDS) is disordered.

This is an uncharacterized protein from Bacillus subtilis (strain 168).